A 191-amino-acid polypeptide reads, in one-letter code: dTTP/UTP pyrophosphatase (191 aa).

The Proton acceptor role is filled by Asp69.

Belongs to the Maf family. YhdE subfamily. It depends on a divalent metal cation as a cofactor.

The protein localises to the cytoplasm. The enzyme catalyses dTTP + H2O = dTMP + diphosphate + H(+). It catalyses the reaction UTP + H2O = UMP + diphosphate + H(+). Functionally, nucleoside triphosphate pyrophosphatase that hydrolyzes dTTP and UTP. May have a dual role in cell division arrest and in preventing the incorporation of modified nucleotides into cellular nucleic acids. The protein is dTTP/UTP pyrophosphatase of Desulforamulus reducens (strain ATCC BAA-1160 / DSM 100696 / MI-1) (Desulfotomaculum reducens).